Here is a 649-residue protein sequence, read N- to C-terminus: Acetyl-coenzyme A synthetase (649 aa).

CoA is bound by residues 191 to 194 (RAGR), T311, and N335. ATP is bound by residues 387 to 389 (GEP), 411 to 416 (DTWWQT), D500, and R515. S523 serves as a coordination point for CoA. Residue R526 coordinates ATP. V537, F539, and I542 together coordinate Mg(2+). R584 provides a ligand contact to CoA. K609 carries the post-translational modification N6-acetyllysine.

This sequence belongs to the ATP-dependent AMP-binding enzyme family. Mg(2+) serves as cofactor. In terms of processing, acetylated. Deacetylation by the SIR2-homolog deacetylase activates the enzyme.

It catalyses the reaction acetate + ATP + CoA = acetyl-CoA + AMP + diphosphate. Catalyzes the conversion of acetate into acetyl-CoA (AcCoA), an essential intermediate at the junction of anabolic and catabolic pathways. AcsA undergoes a two-step reaction. In the first half reaction, AcsA combines acetate with ATP to form acetyl-adenylate (AcAMP) intermediate. In the second half reaction, it can then transfer the acetyl group from AcAMP to the sulfhydryl group of CoA, forming the product AcCoA. The polypeptide is Acetyl-coenzyme A synthetase (Photobacterium profundum (strain SS9)).